We begin with the raw amino-acid sequence, 1801 residues long: Focadhesin (1801 aa).

The residue at position 819 (K819) is an N6-acetyllysine.

Interacts with VCL. As to expression, ubiquitous. High expression in brain followed by testis, muscle, pancreas, heart, ovary, small intestine, placenta, prostate, thymus, kidney, colon, liver, lung, spleen and leukocytes. Expression is reduced in most glioblastomas and all glioblastoma cell lines.

It is found in the cell junction. It localises to the focal adhesion. The protein resides in the cytoplasm. Its subcellular location is the cytosol. Required for the maintenance of SKIC2 and SKIC3 proteostatic levels in the liver. May be involved in the regulation of RNA degradation by the exosome complex. Potential tumor suppressor in gliomas. The chain is Focadhesin from Homo sapiens (Human).